Consider the following 183-residue polypeptide: Large ribosomal subunit protein uL5 (183 aa).

Belongs to the universal ribosomal protein uL5 family. As to quaternary structure, part of the 50S ribosomal subunit; part of the 5S rRNA/L5/L18/L25 subcomplex. Contacts the 5S rRNA and the P site tRNA. Forms a bridge to the 30S subunit in the 70S ribosome.

Functionally, this is one of the proteins that bind and probably mediate the attachment of the 5S RNA into the large ribosomal subunit, where it forms part of the central protuberance. In the 70S ribosome it contacts protein S13 of the 30S subunit (bridge B1b), connecting the 2 subunits; this bridge is implicated in subunit movement. Contacts the P site tRNA; the 5S rRNA and some of its associated proteins might help stabilize positioning of ribosome-bound tRNAs. This is Large ribosomal subunit protein uL5 from Flavobacterium johnsoniae (strain ATCC 17061 / DSM 2064 / JCM 8514 / BCRC 14874 / CCUG 350202 / NBRC 14942 / NCIMB 11054 / UW101) (Cytophaga johnsonae).